The primary structure comprises 411 residues: Exodeoxyribonuclease 7 large subunit (411 aa).

Belongs to the XseA family. In terms of assembly, heterooligomer composed of large and small subunits.

It localises to the cytoplasm. It catalyses the reaction Exonucleolytic cleavage in either 5'- to 3'- or 3'- to 5'-direction to yield nucleoside 5'-phosphates.. Bidirectionally degrades single-stranded DNA into large acid-insoluble oligonucleotides, which are then degraded further into small acid-soluble oligonucleotides. The chain is Exodeoxyribonuclease 7 large subunit from Mycobacterium sp. (strain KMS).